A 599-amino-acid chain; its full sequence is Elongation factor 4 (599 aa).

The region spanning 2 to 184 (KNIRNFSIIA…RLVRDIPPPE (183 aa)) is the tr-type G domain. GTP-binding positions include 14 to 19 (DHGKST) and 131 to 134 (NKID).

This sequence belongs to the TRAFAC class translation factor GTPase superfamily. Classic translation factor GTPase family. LepA subfamily.

Its subcellular location is the cell inner membrane. The enzyme catalyses GTP + H2O = GDP + phosphate + H(+). Its function is as follows. Required for accurate and efficient protein synthesis under certain stress conditions. May act as a fidelity factor of the translation reaction, by catalyzing a one-codon backward translocation of tRNAs on improperly translocated ribosomes. Back-translocation proceeds from a post-translocation (POST) complex to a pre-translocation (PRE) complex, thus giving elongation factor G a second chance to translocate the tRNAs correctly. Binds to ribosomes in a GTP-dependent manner. In Sodalis glossinidius (strain morsitans), this protein is Elongation factor 4.